A 165-amino-acid polypeptide reads, in one-letter code: Nucleotide-binding protein NATL1_05371 (165 aa).

This sequence belongs to the YajQ family.

In terms of biological role, nucleotide-binding protein. This chain is Nucleotide-binding protein NATL1_05371, found in Prochlorococcus marinus (strain NATL1A).